We begin with the raw amino-acid sequence, 319 residues long: Urease accessory protein UreD (319 aa).

The interval 298-319 (QEQPLPPSSFKTNTAVPAVRTH) is disordered.

Belongs to the UreD family. As to quaternary structure, ureD, UreF and UreG form a complex that acts as a GTP-hydrolysis-dependent molecular chaperone, activating the urease apoprotein by helping to assemble the nickel containing metallocenter of UreC. The UreE protein probably delivers the nickel.

Its subcellular location is the cytoplasm. Functionally, required for maturation of urease via the functional incorporation of the urease nickel metallocenter. This chain is Urease accessory protein UreD, found in Synechococcus sp. (strain WH7805).